Consider the following 372-residue polypeptide: MTSLLLNAKCLVVKVGSSLVTNNGAGLDKGAIAAWADQIARLVKSGRQVVLVSSGAVAEGMQRLGWKKRPVAINELQAAAAVGQMGLVQMYESCFASHGLHTAQILLTHADLADRKRYLNARTTLRTLLDLGVIPIINENDTVVTDEIRFGDNDTLGSLVANLIEADALVILTDQPGLYSADPRKHPDAQFIQYETAGNPALEKMAGGAGTLIGSGGMLTKILAAKRAARSGAHTVIASGREPDILVRLAQGEVVGTHLKAGQVKTLARKQWLADQLRVAGKVVVDEGAAKALREGGRSLLPIGVMAVEGSFERGEVVSCVNTAGEEIARGLVNYSALETARILRQPSHEIEHILGYIDGPELIHRDNLILV.

Residue Lys14 participates in ATP binding. Substrate is bound by residues Ser54, Asp141, and Asn153. Residues 173 to 174 and 215 to 221 contribute to the ATP site; these read TD and SGGMLTK. In terms of domain architecture, PUA spans 280–358; sequence AGKVVVDEGA…HEIEHILGYI (79 aa).

This sequence belongs to the glutamate 5-kinase family.

Its subcellular location is the cytoplasm. It catalyses the reaction L-glutamate + ATP = L-glutamyl 5-phosphate + ADP. The protein operates within amino-acid biosynthesis; L-proline biosynthesis; L-glutamate 5-semialdehyde from L-glutamate: step 1/2. Catalyzes the transfer of a phosphate group to glutamate to form L-glutamate 5-phosphate. The polypeptide is Glutamate 5-kinase (Methylobacillus flagellatus (strain ATCC 51484 / DSM 6875 / VKM B-1610 / KT)).